The following is a 289-amino-acid chain: NAC domain-containing protein 2 (289 aa).

Residues Leu-7–Lys-158 form the NAC domain.

In terms of assembly, interacts with KIN10 and KIN11.

It is found in the nucleus. In Arabidopsis thaliana (Mouse-ear cress), this protein is NAC domain-containing protein 2 (NAC002).